The sequence spans 2065 residues: Cytoskeleton-associated protein 5-A (2065 aa).

TOG regions lie at residues 1 to 240 (MGDD…DLKA) and 264 to 515 (VDAY…KETK). HEAT repeat units follow at residues 120–157 (EKAEVVQEELLKGLDNKNPKIVVACVETVRKALSEFGS), 160–197 (MTLKPIIKVLPKLFESREKAIRDEAKLLAVEIYRWIRD), 270–311 (LEAV…NPKI), 314–352 (GDFADLVKALKTVVGKDTNVMLVALAAKCIAGLAAGLRK), 356–393 (SYAGHIVPTILEKFKEKKPQVVQALQEAIDAVFLTTTL), 395–432 (NISEDVLAVMDNKNPAIKQQTSLFLARSFRHCTPSTLP), and 436–477 (LKPF…VNPF). Residues 500-574 (NGKKGGAAAG…GATAKGKKAV (75 aa)) are disordered. Low complexity predominate over residues 538-568 (KAAAAPKKAPAAKPGGPVKKAKAPASSGATA). The tract at residues 644 to 808 (KPGFKETNFQ…LSQIDAEFEK (165 aa)) is TOG 3. HEAT repeat units lie at residues 652–689 (FQVMQMKLHIVALIAQKGNFSKTSACAVLDGLVDKVGD) and 748–785 (INVKAFISNVKTALAATNPAIRTSAITLLGVMYLYMGA). The segment at 809 to 849 (MKGQTPPVSIRGSKHGSGRDEGEEGEEQDEDAPADVTDLLP) is disordered. The segment covering 829 to 841 (EGEEGEEQDEDAP) has biased composition (acidic residues). Positions 846 to 1090 (DLLPRTDISD…AGPPGKASSK (245 aa)) are TOG 4. HEAT repeat units follow at residues 852–889 (DISDKISSDLVSKIEDKNWKIRKEGLDEVTAIINEAKF), 892–929 (PSIGELPSALKGRLNDSNKILVQQTLTILQQLSTAMGH), 933–970 (QHVKNLGMPIITVLGDSKANVRAAALGTLKSWVDQTGM), and 1015–1052 (CVPYLYNCLEDRNGDVRKKAQEALPIFMMHIGFEKMSK). Positions 1074–1115 (ASMPAKPAGPPGKASSKQPPAVAQASASPPPAASSDSGSSTS) are enriched in low complexity. Positions 1074-1192 (ASMPAKPAGP…AKDEEDKSGP (119 aa)) are disordered. A compositionally biased stretch (polar residues) spans 1126 to 1163 (PGTQASKAKTQSVSSEGNTSLNPSNTSLTPSKANTSLS). The interval 1150-1235 (NTSLTPSKAN…IEQLKTQMSP (86 aa)) is interaction with microtubule lattice. Residues 1191–1460 (GPIYIIVPNG…ERIKRAGKKQ (270 aa)) are TOG 5. HEAT repeat units follow at residues 1251 to 1288 (QRQIKGLAVMTEHLESEKEGVISCLDLVLKWFTLRFFD), 1295 to 1318 (MKCLEYLKLLFIMLSQEEYHLTEM), 1319 to 1355 (EGTSFLPYLMLKVGEPKDIVRKDVRAILTKMCQVYPA), 1357 to 1390 (KMFNFVMEGTKSKNSKQRAECLEELGCLVESYGM), and 1395 to 1432 (PTPAKALKEIAIHIGDRDTTVRNAALNTIVTVYNVHGE). 2 disordered regions span residues 1982–2001 (DNAKQDERPPLTSLLSKSSA) and 2028–2065 (VELDSNQTYPSTTTSSSASSTNIDDLKKRLERIKSSRK). Residues 2002–2065 (PAVVSSTDML…RLERIKSSRK (64 aa)) are interaction with tacc3. Positions 2038–2048 (STTTSSSASST) are enriched in low complexity. The segment covering 2051 to 2065 (DDLKKRLERIKSSRK) has biased composition (basic and acidic residues).

The protein belongs to the TOG/XMAP215 family. In terms of assembly, interacts with tacc3; two molecules of ckap5 interact with 1 molecule of tacc3 probably mediated by coiled coil domains forming a four-helix bundle. Interacts with tacc3 and clathrin forming the TACC3/ch-TOG/clathrin complex located at spindle inter-microtubules bridges. Interacts with ndc80; indicative for an association with the NDC80 comnplex.

It localises to the cytoplasm. The protein localises to the cytoskeleton. The protein resides in the spindle pole. It is found in the spindle. Its subcellular location is the microtubule organizing center. It localises to the centrosome. The protein localises to the chromosome. The protein resides in the centromere. It is found in the kinetochore. Functionally, binds to the plus end of microtubules and regulates microtubule dynamics and microtubule organization. Acts as a processive microtubule polymerase. Promotes cytoplasmic microtubule nucleation and elongation. Plays a major role in organizing spindle poles. In spindle formation protects kinetochore microtubules from depolymerization by kif2c and has an essential role in centrosomal microtubule assembly independently of kif2c activity. Contributes to centrosome integrity. Acts as a component of the TACC3/ch-TOG/clathrin complex proposed to contribute to stabilization of kinetochore fibers of the mitotic spindle by acting as inter-microtubule bridge. Enhances the strength of NDC80 complex-mediated kinetochore-tip microtubule attachments. In Xenopus laevis (African clawed frog), this protein is Cytoskeleton-associated protein 5-A (ckap5-a).